Here is a 332-residue protein sequence, read N- to C-terminus: L-lactate dehydrogenase A chain (332 aa).

Alanine 2 bears the N-acetylalanine mark. At lysine 5 the chain carries N6-acetyllysine; alternate. Lysine 5 is modified (N6-succinyllysine; alternate). Position 14 is an N6-acetyllysine (lysine 14). Phosphothreonine is present on threonine 18. Residue 29 to 57 (GAVGMACAISILMKDLADELALVDVIEDK) coordinates NAD(+). The residue at position 57 (lysine 57) is an N6-acetyllysine; alternate. A Glycyl lysine isopeptide (Lys-Gly) (interchain with G-Cter in SUMO2); alternate cross-link involves residue lysine 57. Lysine 81 carries the N6-acetyllysine modification. Arginine 99 contacts NAD(+). Substrate is bound at residue arginine 106. The residue at position 118 (lysine 118) is an N6-acetyllysine; alternate. Lysine 118 bears the N6-succinyllysine; alternate mark. Lysine 126 is subject to N6-acetyllysine. The substrate site is built by asparagine 138 and arginine 169. Histidine 193 acts as the Proton acceptor in catalysis. Residues lysine 224 and lysine 232 each carry the N6-acetyllysine modification. Residue tyrosine 239 is modified to Phosphotyrosine. Residue lysine 243 is modified to N6-acetyllysine. Position 248 (threonine 248) interacts with substrate. At threonine 309 the chain carries Phosphothreonine. Phosphoserine is present on serine 310. Lysine 318 carries the N6-acetyllysine; alternate modification. Lysine 318 is subject to N6-succinyllysine; alternate. Threonine 322 carries the post-translational modification Phosphothreonine.

This sequence belongs to the LDH/MDH superfamily. LDH family. As to quaternary structure, homotetramer. Interacts with PTEN upstream reading frame protein MP31. In terms of processing, ISGylated.

It is found in the cytoplasm. The catalysed reaction is (S)-lactate + NAD(+) = pyruvate + NADH + H(+). It participates in fermentation; pyruvate fermentation to lactate; (S)-lactate from pyruvate: step 1/1. Functionally, interconverts simultaneously and stereospecifically pyruvate and lactate with concomitant interconversion of NADH and NAD(+). In Pongo abelii (Sumatran orangutan), this protein is L-lactate dehydrogenase A chain (LDHA).